Here is a 650-residue protein sequence, read N- to C-terminus: Acetyl-coenzyme A synthetase (650 aa).

Residues 191 to 194, threonine 311, and asparagine 335 each bind CoA; that span reads RGGR. ATP is bound by residues 387–389, 411–416, aspartate 501, and arginine 516; these read GEP and DTWWQT. Serine 524 is a binding site for CoA. Residue arginine 527 coordinates ATP. 3 residues coordinate Mg(2+): valine 538, histidine 540, and isoleucine 543. Arginine 585 lines the CoA pocket. Lysine 610 bears the N6-acetyllysine mark.

The protein belongs to the ATP-dependent AMP-binding enzyme family. The cofactor is Mg(2+). Acetylated. Deacetylation by the SIR2-homolog deacetylase activates the enzyme.

The enzyme catalyses acetate + ATP + CoA = acetyl-CoA + AMP + diphosphate. Catalyzes the conversion of acetate into acetyl-CoA (AcCoA), an essential intermediate at the junction of anabolic and catabolic pathways. AcsA undergoes a two-step reaction. In the first half reaction, AcsA combines acetate with ATP to form acetyl-adenylate (AcAMP) intermediate. In the second half reaction, it can then transfer the acetyl group from AcAMP to the sulfhydryl group of CoA, forming the product AcCoA. The protein is Acetyl-coenzyme A synthetase of Vibrio parahaemolyticus serotype O3:K6 (strain RIMD 2210633).